A 622-amino-acid polypeptide reads, in one-letter code: Threonine--tRNA ligase (622 aa).

The editing domain stretch occupies residues 1-136; that stretch reads MKTLLIHSDY…PLSELSRKIT (136 aa). The tract at residues 199 to 498 is catalytic; that stretch reads PHVKYIKEKE…TLENKPPALP (300 aa). 3 residues coordinate Zn(2+): Cys291, His343, and His467.

This sequence belongs to the class-II aminoacyl-tRNA synthetase family. In terms of assembly, homodimer. Zn(2+) is required as a cofactor.

The protein resides in the cytoplasm. It catalyses the reaction tRNA(Thr) + L-threonine + ATP = L-threonyl-tRNA(Thr) + AMP + diphosphate + H(+). Functionally, catalyzes the attachment of threonine to tRNA(Thr) in a two-step reaction: L-threonine is first activated by ATP to form Thr-AMP and then transferred to the acceptor end of tRNA(Thr). Also edits incorrectly charged L-seryl-tRNA(Thr). This Methanococcus maripaludis (strain DSM 14266 / JCM 13030 / NBRC 101832 / S2 / LL) protein is Threonine--tRNA ligase.